Here is a 303-residue protein sequence, read N- to C-terminus: Nucleotide-binding protein SAB0719 (303 aa).

Residue 18–25 (GLSGAGKS) participates in ATP binding. 69–72 (DLRG) lines the GTP pocket.

It belongs to the RapZ-like family.

Displays ATPase and GTPase activities. This chain is Nucleotide-binding protein SAB0719, found in Staphylococcus aureus (strain bovine RF122 / ET3-1).